A 968-amino-acid polypeptide reads, in one-letter code: RNA polymerase-associated protein RapA (968 aa).

Residues D164 to N334 enclose the Helicase ATP-binding domain. D177–T184 is a binding site for ATP. The short motif at D280 to H283 is the DEAH box element. In terms of domain architecture, Helicase C-terminal spans R490–D644.

It belongs to the SNF2/RAD54 helicase family. RapA subfamily. As to quaternary structure, interacts with the RNAP. Has a higher affinity for the core RNAP than for the holoenzyme. Its ATPase activity is stimulated by binding to RNAP.

In terms of biological role, transcription regulator that activates transcription by stimulating RNA polymerase (RNAP) recycling in case of stress conditions such as supercoiled DNA or high salt concentrations. Probably acts by releasing the RNAP, when it is trapped or immobilized on tightly supercoiled DNA. Does not activate transcription on linear DNA. Probably not involved in DNA repair. This chain is RNA polymerase-associated protein RapA, found in Salmonella arizonae (strain ATCC BAA-731 / CDC346-86 / RSK2980).